The chain runs to 331 residues: MTIIVTGAAGFIGSNLVKGLNARGENHIVAVDNLHRADKFHNLVDCEIRDYLDKDDFLSRFERGEFGRVRAVFHLGACTDTMEQDGRYLMENNYRYSKTLMELCLAQDTQFIYASSAAVYGESHSFREAREYERPLSVYGYSKFLFDQAVRNRLDGALSQVVGLRYFNVYGPGEAHKARMASIVCQQFEQFRAEGTVKLFGEHGGHGPGCQSHDFVSIDDVVKVNLFFLDHPRRSGIFNVGSGHARSFNDVACVVVNTLRAAEDKPPLALEELVQEGLLEYLRFPDALRGRYQSFTQSDSSRLREAGYTAPFVAMEEGVARYCQWLLERGQ.

Residues 11–12 (FI), 32–33 (DN), Lys39, Lys54, 75–79 (LGACT), and Asn92 contribute to the NADP(+) site. The Proton acceptor role is filled by Tyr139. An NADP(+)-binding site is contributed by Lys143. Asn168 serves as a coordination point for substrate. NADP(+) is bound by residues Val169 and Lys177. The Proton acceptor role is filled by Lys177. Residues Arg179, Gln186, 200–203 (FGEH), His213, and Tyr292 each bind substrate.

It belongs to the NAD(P)-dependent epimerase/dehydratase family. HldD subfamily. Homopentamer. NADP(+) serves as cofactor.

It catalyses the reaction ADP-D-glycero-beta-D-manno-heptose = ADP-L-glycero-beta-D-manno-heptose. The protein operates within nucleotide-sugar biosynthesis; ADP-L-glycero-beta-D-manno-heptose biosynthesis; ADP-L-glycero-beta-D-manno-heptose from D-glycero-beta-D-manno-heptose 7-phosphate: step 4/4. Its function is as follows. Catalyzes the interconversion between ADP-D-glycero-beta-D-manno-heptose and ADP-L-glycero-beta-D-manno-heptose via an epimerization at carbon 6 of the heptose. The protein is ADP-L-glycero-D-manno-heptose-6-epimerase of Cupriavidus pinatubonensis (strain JMP 134 / LMG 1197) (Cupriavidus necator (strain JMP 134)).